Consider the following 135-residue polypeptide: Probable 5-hydroxyisourate hydrolase R09H10.3 (135 aa).

The first 20 residues, 1–20 (MNKFSLFFALTATLMTITES), serve as a signal peptide directing secretion. Substrate contacts are provided by His-30, Arg-68, and Tyr-132.

The protein belongs to the transthyretin family. 5-hydroxyisourate hydrolase subfamily. As to quaternary structure, homotetramer.

The catalysed reaction is 5-hydroxyisourate + H2O = 5-hydroxy-2-oxo-4-ureido-2,5-dihydro-1H-imidazole-5-carboxylate + H(+). Functionally, catalyzes the hydrolysis of 5-hydroxyisourate (HIU) to 2-oxo-4-hydroxy-4-carboxy-5-ureidoimidazoline (OHCU). This Caenorhabditis elegans protein is Probable 5-hydroxyisourate hydrolase R09H10.3.